A 766-amino-acid chain; its full sequence is Serine/threonine-protein kinase PKH1 (766 aa).

Residues 1–52 (MGNRSLTEADHALLSKPLVPTSAEHTQTQEYPRPFVDGSNSQSGSELQASPQ) are disordered. Positions 38–52 (GSNSQSGSELQASPQ) are enriched in polar residues. The Protein kinase domain occupies 125 to 391 (FKFGEQLGDG…IKQIKAHLFF (267 aa)). ATP is bound by residues 135 to 137 (SYS) and K154. Residues 156–201 (LSKEYLIRQKKVKYVTVEKLALQKLNGTKGIFKLFFTFQDEASLYF) are PIF-pocket. Residues 204–206 (EYA) and D210 each bind ATP. Residue D249 is the Proton acceptor of the active site. ATP is bound by residues E253 and D267. Phosphoserine occurs at positions 294 and 296. The span at 476–495 (TSQPKLGSKSSTSVRSASNN) shows a compositional bias: polar residues. Disordered regions lie at residues 476–529 (TSQP…NRSR) and 725–745 (PEEG…SSSN). The span at 511 to 521 (SVSSPSISTTS) shows a compositional bias: low complexity. Residues 735–745 (PTSLQTRSSSN) show a composition bias toward polar residues.

This sequence belongs to the protein kinase superfamily. AGC Ser/Thr protein kinase family. PDPK1 subfamily.

It carries out the reaction L-seryl-[protein] + ATP = O-phospho-L-seryl-[protein] + ADP + H(+). It catalyses the reaction L-threonyl-[protein] + ATP = O-phospho-L-threonyl-[protein] + ADP + H(+). In terms of biological role, activates YPK1 by phosphorylating of a threonine residue. This chain is Serine/threonine-protein kinase PKH1 (PKH1), found in Saccharomyces cerevisiae (strain ATCC 204508 / S288c) (Baker's yeast).